We begin with the raw amino-acid sequence, 268 residues long: Microtubule-associated protein RP/EB family member 1 (268 aa).

Ala2 carries the N-acetylalanine modification. A Calponin-homology (CH) domain is found at 14–116; sequence NLSRHDMLAW…FVQWFKKFFD (103 aa). An N6-crotonyllysine modification is found at Lys66. Position 124 is a phosphotyrosine (Tyr124). An interaction with MTUS2/TIP150 region spans residues 124–268; that stretch reads YDPVAARQGQ…GGPQEEQEEY (145 aa). The tract at residues 146 to 191 is disordered; sequence LSKPKKPLGSGSAAPQRPIATQRTTAAPKAGPGMVRKNPGMGNGDD. A Phosphoserine modification is found at Ser155. Residues 185 to 255 enclose the EB1 C-terminal domain; sequence GMGNGDDEAA…LYATDEGFVI (71 aa). The interval 206–211 is interaction with APC; sequence TVEDLE. The interval 208–268 is DCTN1-binding; that stretch reads EDLEKERDFY…GGPQEEQEEY (61 aa). Lys220 bears the N6-acetyllysine mark. The interval 220-242 is APC-binding; sequence KLRNIELICQENEGENDPVLQRI. An interaction with SKA1 region spans residues 232–255; it reads EGENDPVLQRIVDILYATDEGFVI.

This sequence belongs to the MAPRE family. Homodimer. Heterodimer with MAPRE3. Interacts with DCTN1, DCTN2, TERF1 and dynein intermediate chain. Interaction with DIAPH1 and DIAPH2. Interacts (via C-terminal residues 206-211) with APC (via C-terminal residues 2674-2845); the interaction inhibits association with and bundling of F-actin. Interacts with CLASP2, DST, KIF2C and STIM1; probably required for their targeting to the growing microtubule plus ends. Interacts with MTUS2; interaction is direct and probably targets MTUS2 to microtubules. Interacts (via C-terminus) with SKA1 (via SXIP motif); the interaction is direct and stabilizes the kinetochore-microtubule attachment of the SKA1 complex. Interacts with APC2. Interacts with CLASP1. Interacts with CDK5RAP2. According to another report, MAPRE1 does not interact with CDK5RAP2. Interacts with MACF1. Interacts with RABL2/RABL2A; binds preferentially to GTP-bound RABL2. Interacts with KCNAB2. Interacts (via C-terminus) with CLIP1. Interacts with SLAIN2 and SLAIN1. Interacts with KIF18B; this interaction is required for efficient accumulation of KIF18B at microtubule plus ends. Interacts with MISP. Interacts with KNSTRN. Interacts with NCKAP5L. Interacts with AKAP9. Interacts with PDE4DIP; this interaction, which is PDE4DIP isoform-specific, is required for its recruitment to the Golgi apparatus. Interacts with CAMSAP2. May form a pericentrosomal complex with AKAP9, CDK5RAP2 and PDE4DIP isoform 2/MMG8/SMYLE; within this complex, MAPRE1 binding to CDK5RAP2 may be mediated by PDE4DIP. Contrary to other mammalian species, does not interact with CDK5RAP2, possibly due to the lack of conservation of the MAPRE1-binding motif in rat CDK5RAP2. Interacts with AKNA. Interacts with GAS2L1, GAS2L2, and GAS2L3. Interacts with RARRES1 and AGBL2. In terms of processing, acetylation at Lys-220 by KAT2B/PCAF promotes dynamic kinetochore-microtubule interactions in early mitosis. Crotonylated by KAT5 during mitosis, promoting astral microtubule plasticity and dynamic connection between astral microtubules and the cortex during mitotic chromosome segregation, thereby ensuring accurate spindle positioning in mitosis. Decrotonylated by HDAC3.

It localises to the cytoplasm. It is found in the cytoskeleton. The protein resides in the microtubule organizing center. The protein localises to the centrosome. Its subcellular location is the golgi apparatus. It localises to the spindle. It is found in the spindle pole. Functionally, plus-end tracking protein (+TIP) that binds to the plus-end of microtubules and regulates the dynamics of the microtubule cytoskeleton. Recruits other +TIP proteins to microtubules by binding to a conserved Ser-X-Leu-Pro (SXLP) motif in their polypeptide chains. Promotes cytoplasmic microtubule nucleation and elongation. Involved in mitotic spindle positioning by stabilizing microtubules and promoting dynamic connection between astral microtubules and the cortex during mitotic chromosome segregation. Assists chromosome alignment in metaphase by recruiting the SKA complex to the spindle and stabilizing its interactions with microtubule bundles (K-fibers). Also acts as a regulator of minus-end microtubule organization: interacts with the complex formed by AKAP9 and PDE4DIP, leading to recruit CAMSAP2 to the Golgi apparatus, thereby tethering non-centrosomal minus-end microtubules to the Golgi, an important step for polarized cell movement. Promotes elongation of CAMSAP2-decorated microtubule stretches on the minus-end of microtubules. Acts as a regulator of autophagosome transport via interaction with CAMSAP2. Functions downstream of Rho GTPases and DIAPH1 in stable microtubule formation. May play a role in cell migration. This is Microtubule-associated protein RP/EB family member 1 (Mapre1) from Rattus norvegicus (Rat).